Reading from the N-terminus, the 216-residue chain is CsgBAC operon transcriptional regulatory protein (216 aa).

In terms of domain architecture, HTH luxR-type spans 149 to 214; the sequence is NSTESALLTH…QAVSWANDNL (66 aa). Residues 173–192 constitute a DNA-binding region (H-T-H motif); it reads NNEIARSLFISENTVKTHLY.

It localises to the cell inner membrane. Functionally, the master regulator for adhesive curli fimbriae expression; necessary for transcription of the csgBAC/ymdA operon. Plays a positive role in biofilm formation. May have the capability to respond to starvation and/or high cell density by activating csgBA transcription. Low-level constitutive expression confers an adherent curli fimbriae-expressing phenotype, up-regulates 10 genes and down-regulates 14 others. The chain is CsgBAC operon transcriptional regulatory protein (csgD) from Escherichia coli (strain K12).